Consider the following 115-residue polypeptide: Large ribosomal subunit protein bL20 (115 aa).

The protein belongs to the bacterial ribosomal protein bL20 family.

Binds directly to 23S ribosomal RNA and is necessary for the in vitro assembly process of the 50S ribosomal subunit. It is not involved in the protein synthesizing functions of that subunit. In Prochlorococcus marinus (strain MIT 9301), this protein is Large ribosomal subunit protein bL20.